The sequence spans 231 residues: DNA mismatch repair protein MutH (231 aa).

This sequence belongs to the MutH family.

The protein localises to the cytoplasm. In terms of biological role, sequence-specific endonuclease that cleaves unmethylated GATC sequences. It is involved in DNA mismatch repair. This Pectobacterium atrosepticum (strain SCRI 1043 / ATCC BAA-672) (Erwinia carotovora subsp. atroseptica) protein is DNA mismatch repair protein MutH.